A 158-amino-acid chain; its full sequence is Extracellular giant hemoglobin major globin subunit A2 (158 aa).

Positions 1–16 (MKSLIVFACLVAYAAA) are cleaved as a signal peptide. The Globin domain occupies 17–158 (DCTSLNRLLV…MNQIVSGISG (142 aa)). The cysteines at positions 18 and 148 are disulfide-linked. Cys89 contributes to the hydrogen sulfide binding site. Residue His110 participates in heme b binding.

It belongs to the globin family. As to quaternary structure, the 400 kDa hemoglobin consists of a spherical 24-mer arranged as a double layer of dome-shaped dodecamers. Each dodecamer is composed of the 3-fold trimer of the tetramer A1-A2-B1-B2 having one intra-tetramer (A1-B2) disulfide bond and one inter-tetramer (B1-B2) disulfide bond per tetramer.

The protein resides in the secreted. Its function is as follows. The extracellular giant hemoglobin is able to bind and transport oxygen and hydrosulfide simultaneously and reversibly at two different sites. In Oligobrachia mashikoi (Beard worm), this protein is Extracellular giant hemoglobin major globin subunit A2 (ghbA2).